The chain runs to 389 residues: Zinc finger C2HC domain-containing protein 1C homolog (389 aa).

Disordered regions lie at residues 16 to 44 and 84 to 115; these read MLPHNTTEAPGPHSAKQDSYEQGDSSQQS and SYPHCTGISQQDPESDSQGQGKGLFYSSGPQS. 2 stretches are compositionally biased toward polar residues: residues 35-44 and 90-102; these read YEQGDSSQQS and GISQQDPESDSQG. Positions 211–266 form a coiled coil; sequence VQIRRLEAAGESLEEEIRRKQILLRGKLKKTEEELRRIQMQKEQAKENENRELQKI. Disordered stretches follow at residues 301-320 and 343-389; these read REDETWGRSQQNSSPFQLSD and SELS…PQLG. Polar residues predominate over residues 307 to 317; that stretch reads GRSQQNSSPFQ. Low complexity predominate over residues 368–382; the sequence is SSLSMAPDSSGSSGS.

Belongs to the ZC2HC1 family.

In Pongo abelii (Sumatran orangutan), this protein is Zinc finger C2HC domain-containing protein 1C homolog (ZC2HC1C).